Consider the following 421-residue polypeptide: CinA-like protein (421 aa).

Belongs to the CinA family.

This chain is CinA-like protein, found in Myxococcus xanthus (strain DK1622).